The chain runs to 261 residues: Guanine nucleotide exchange factor BopE (261 aa).

Over residues 241–253 the composition is skewed to basic and acidic residues; that stretch reads RRAAQDASRDEKG. Residues 241 to 261 are disordered; the sequence is RRAAQDASRDEKGAANAADGA.

It belongs to the GEF (guanine exchange factor) SopE family. Monomer. Interacts with human CDC42.

The protein localises to the secreted. Activator for both CDC42 and RAC1 by directly interacting with these Rho GTPases and acting as a guanine nucleotide exchange factor (GEF). This activation results in actin cytoskeleton rearrangements and stimulates membrane ruffling, thus promoting bacterial entry into non-phagocytic cells. In Burkholderia thailandensis (strain ATCC 700388 / DSM 13276 / CCUG 48851 / CIP 106301 / E264), this protein is Guanine nucleotide exchange factor BopE (bopE).